The following is a 290-amino-acid chain: TIMELESS-interacting protein (290 aa).

A disordered region spans residues 1–59; it reads MLEPQENGLTDLPDYEHIEDETFPPFPPPASPGREDGEGAEPEEESGRGAPVPVPPKRT. The segment at 67-143 is interaction with TIMELESS; that stretch reads LNAERLISER…KEVQTCLKRI (77 aa). Residues S194 and S222 each carry the phosphoserine modification. Residues 221–242 are compositionally biased toward polar residues; sequence NSQSLGNDLSVNTPSTQTSEAG. The interval 221–290 is disordered; the sequence is NSQSLGNDLS…VEETQLDQSF (70 aa). A phosphothreonine mark is found at T233 and T244.

This sequence belongs to the CSM3 family. As to quaternary structure, interacts with TIMELESS (via N-terminus), which impairs TIMELESS self-association. Associates with the MCM2-7 complex. Interacts with RPA2, PRDX2.

It localises to the cytoplasm. It is found in the nucleus. Functionally, plays an important role in the control of DNA replication and the maintenance of replication fork stability. Important for cell survival after DNA damage or replication stress. May be specifically required for the ATR-CHEK1 pathway in the replication checkpoint induced by hydroxyurea or ultraviolet light. Forms a complex with TIMELESS and this complex regulates DNA replication processes under both normal and stress conditions, stabilizes replication forks and influences both CHEK1 phosphorylation and the intra-S phase checkpoint in response to genotoxic stress. The protein is TIMELESS-interacting protein (TIPIN) of Bos taurus (Bovine).